The following is a 611-amino-acid chain: MRATQLYAASFRPGFDSPPQLVPVALRGSAPDTTTVASAGELAVGTTDPCPAPVAQIGVADVYVPAPTSPEPEGLPQVAPVFSRGNVPDTTAVPAAAGTTVGVADPYLPPGVGHLSGFAVPSHGIVPTVPGVLAGGPPTAPVAPRNSAPVLRPEWPYHVPSVSDLDWFDAVPAGVPGGDEHNYNFLIAAPQVPRLADEHEMVDVFDIQAVRADFPILQETVNGKPLIWFDNAATTQKPQVVIDRLSYFYAHENSNIHRAAHELAARATDAYEEARETARRFIGAAKAQEIIFVRGTTEAINLVAYAWGGKHLQPGDEVVITHLEHHANIVPWQLLSSQTGAILKVAPVDDAGNLLMSEFEDLLGPRTKLVAATQVSNALGTVTQGEKIVELGHRYGARVLIDGAQSIPHLPINVSELGADFFVFSGHKIYGPTGIGVLYGCEDVLTEMPPWQGGGNMIVDVTLERSLYQGPPNKFEAGTGNIADAVGLGEALRYVERVGVQRIASHEQALLDYATPRLADIPGVRLVGTATEKASVLSFVLAGHEPLEVGKALNAEGIAVRAGHHCAQPVLRRLGLEATVRPSFAFYNTYEEIDVFINVVRRIAEGGTNIG.

The interval 1-208 is cargo-loading domain; that stretch reads MRATQLYAAS…HEMVDVFDIQ (208 aa). The residue at position 428 (Lys-428) is an N6-(pyridoxal phosphate)lysine. The Cysteine persulfide intermediate role is filled by Cys-566.

It belongs to the class-V pyridoxal-phosphate-dependent aminotransferase family. Csd subfamily. There are 1-2 copies of this protein in each type 2A encapsulin shell. It depends on pyridoxal 5'-phosphate as a cofactor.

The protein resides in the encapsulin nanocompartment. It catalyses the reaction (sulfur carrier)-H + L-cysteine = (sulfur carrier)-SH + L-alanine. Functionally, cargo protein of a type 2A encapsulin nanocompartment involved in sulfur metabolism. Cysteine desulfurases mobilize the sulfur from L-cysteine to yield L-alanine, an essential step in sulfur metabolism for biosynthesis of a variety of sulfur-containing biomolecules. The chain is Probable cysteine desulfurase 1 from Mycobacterium leprae (strain TN).